The following is a 487-amino-acid chain: uncharacterized protein (487 aa).

This sequence belongs to the UbiD family.

This is an uncharacterized protein from Aeropyrum pernix (strain ATCC 700893 / DSM 11879 / JCM 9820 / NBRC 100138 / K1).